The sequence spans 88 residues: YcgL domain-containing protein CGSHiGG_01115 (88 aa).

Residues 1-85 (MLCAIYKSKK…QDDGLFNSLS (85 aa)) form the YcgL domain.

This is YcgL domain-containing protein CGSHiGG_01115 from Haemophilus influenzae (strain PittGG).